A 642-amino-acid polypeptide reads, in one-letter code: Threonine--tRNA ligase (642 aa).

In terms of domain architecture, TGS spans 1 to 61 (MPVITLPDGS…ETDAELSIIT (61 aa)). A catalytic region spans residues 243 to 534 (DHRKIGKQLD…LIEEYAGRFP (292 aa)). Zn(2+) contacts are provided by Cys-334, His-385, and His-511.

The protein belongs to the class-II aminoacyl-tRNA synthetase family. Homodimer. Zn(2+) is required as a cofactor.

It localises to the cytoplasm. The enzyme catalyses tRNA(Thr) + L-threonine + ATP = L-threonyl-tRNA(Thr) + AMP + diphosphate + H(+). Catalyzes the attachment of threonine to tRNA(Thr) in a two-step reaction: L-threonine is first activated by ATP to form Thr-AMP and then transferred to the acceptor end of tRNA(Thr). Also edits incorrectly charged L-seryl-tRNA(Thr). The chain is Threonine--tRNA ligase from Shewanella baltica (strain OS195).